The sequence spans 324 residues: Methionyl-tRNA formyltransferase (324 aa).

113 to 116 (SLLP) contacts (6S)-5,6,7,8-tetrahydrofolate.

It belongs to the Fmt family.

It carries out the reaction L-methionyl-tRNA(fMet) + (6R)-10-formyltetrahydrofolate = N-formyl-L-methionyl-tRNA(fMet) + (6S)-5,6,7,8-tetrahydrofolate + H(+). Functionally, attaches a formyl group to the free amino group of methionyl-tRNA(fMet). The formyl group appears to play a dual role in the initiator identity of N-formylmethionyl-tRNA by promoting its recognition by IF2 and preventing the misappropriation of this tRNA by the elongation apparatus. This is Methionyl-tRNA formyltransferase from Bacteroides fragilis (strain ATCC 25285 / DSM 2151 / CCUG 4856 / JCM 11019 / LMG 10263 / NCTC 9343 / Onslow / VPI 2553 / EN-2).